We begin with the raw amino-acid sequence, 193 residues long: MPIDKIITQINETAQLERASFEEMKRKEIDQKFEVKKWQIEADFQKEKASKLEEIERSYRQLRNKQKMQVKQEILNAKQEVLQRLFTEATLQLENEPKEEQLALMKQMIQTLPINGTARLIPGEKSADILTPAVIAEWNEELPFELIREDFTEKAQAGLIIDDAGIQYNFLFSHLIKEIQETMSAEIAKELFD.

It belongs to the V-ATPase E subunit family. In terms of processing, the N-terminus is blocked.

Its function is as follows. Involved in ATP-driven sodium extrusion. The chain is V-type sodium ATPase subunit E (ntpE) from Enterococcus hirae (strain ATCC 9790 / DSM 20160 / JCM 8729 / LMG 6399 / NBRC 3181 / NCIMB 6459 / NCDO 1258 / NCTC 12367 / WDCM 00089 / R).